The following is a 383-amino-acid chain: Homoserine O-succinyltransferase (383 aa).

Residues 51-360 enclose the AB hydrolase-1 domain; the sequence is NAILLCHALS…EAEHGHDSFL (310 aa). Ser-157 functions as the Nucleophile in the catalytic mechanism. Arg-227 contacts substrate. Active-site residues include Asp-323 and His-356. Residue Asp-357 participates in substrate binding.

It belongs to the AB hydrolase superfamily. MetX family. As to quaternary structure, homodimer.

The protein localises to the cytoplasm. The enzyme catalyses L-homoserine + succinyl-CoA = O-succinyl-L-homoserine + CoA. Its pathway is amino-acid biosynthesis; L-methionine biosynthesis via de novo pathway; O-succinyl-L-homoserine from L-homoserine: step 1/1. Its function is as follows. Transfers a succinyl group from succinyl-CoA to L-homoserine, forming succinyl-L-homoserine. This chain is Homoserine O-succinyltransferase, found in Acidithiobacillus ferrooxidans (strain ATCC 23270 / DSM 14882 / CIP 104768 / NCIMB 8455) (Ferrobacillus ferrooxidans (strain ATCC 23270)).